The chain runs to 287 residues: Glucose import system permease protein GlcU (287 aa).

7 consecutive transmembrane segments (helical) span residues 14–34 (HYLA…AMLI), 76–96 (IIVI…AYFF), 113–133 (VLFS…LLPL), 149–169 (IIFA…SMFI), 194–214 (IVFP…IIQA), 218–238 (FFIP…IAVL), and 250–270 (DTFA…VFLG). The 199-residue stretch at 71–269 (LINSLIIVIP…IIPLAIFVFL (199 aa)) folds into the ABC transmembrane type-1 domain.

It belongs to the binding-protein-dependent transport system permease family. In terms of assembly, the complex is composed of two ATP-binding proteins (GlcV), two transmembrane proteins (GlcT and GlcU) and a solute-binding protein (GlcS).

It is found in the cell membrane. Its function is as follows. Part of the ABC transporter complex GlcSTUV involved in glucose uptake. Responsible for the translocation of the substrate across the membrane. The sequence is that of Glucose import system permease protein GlcU from Saccharolobus solfataricus (strain ATCC 35092 / DSM 1617 / JCM 11322 / P2) (Sulfolobus solfataricus).